Reading from the N-terminus, the 228-residue chain is Probable septum site-determining protein MinC (228 aa).

This sequence belongs to the MinC family. Interacts with MinD and FtsZ.

Functionally, cell division inhibitor that blocks the formation of polar Z ring septums. Rapidly oscillates between the poles of the cell to destabilize FtsZ filaments that have formed before they mature into polar Z rings. Prevents FtsZ polymerization. The protein is Probable septum site-determining protein MinC of Bacillus anthracis (strain A0248).